The sequence spans 1275 residues: O-antigen biosynthesis protein RfbC (1275 aa).

Involved in O-antigen biosynthesis. This is O-antigen biosynthesis protein RfbC (rfbC) from Myxococcus xanthus.